The chain runs to 141 residues: Hemoglobin subunit alpha-D (141 aa).

Positions 1-141 (VLTHEDCELL…VGDMLAEKYR (141 aa)) constitute a Globin domain. His-58 and His-87 together coordinate heme b.

The protein belongs to the globin family. In terms of assembly, there are three forms of hemoglobin in Sphenodon: A, A' and D. Hb A is a tetramer of two alpha-A and two beta-1, Hb A' is a tetramer of two alpha-a and two beta-2, Hb D is a tetramer of two alpha-D and two beta-2. As to expression, red blood cells.

Involved in oxygen transport from the lung to the various peripheral tissues. The protein is Hemoglobin subunit alpha-D (HBAD) of Sphenodon punctatus (Tuatara).